We begin with the raw amino-acid sequence, 322 residues long: tRNA uridine(34) hydroxylase (322 aa).

The Rhodanese domain maps to 125-219 (QQEDTIVVDA…YGKDPEVQGE (95 aa)). Cysteine 179 functions as the Cysteine persulfide intermediate in the catalytic mechanism.

This sequence belongs to the TrhO family.

It catalyses the reaction uridine(34) in tRNA + AH2 + O2 = 5-hydroxyuridine(34) in tRNA + A + H2O. In terms of biological role, catalyzes oxygen-dependent 5-hydroxyuridine (ho5U) modification at position 34 in tRNAs. This is tRNA uridine(34) hydroxylase from Bacillus licheniformis (strain ATCC 14580 / DSM 13 / JCM 2505 / CCUG 7422 / NBRC 12200 / NCIMB 9375 / NCTC 10341 / NRRL NRS-1264 / Gibson 46).